The primary structure comprises 1173 residues: Ubiquitin conjugation factor E4 B (1173 aa).

Methionine 1 carries the post-translational modification N-acetylmethionine. A disordered region spans residues 1–155 (MEELSADEIR…EPSSGPEVSE (155 aa)). Positions 16–33 (RLAGGQTSQPTTPLTSPQ) are enriched in low complexity. Phosphoserine is present on residues serine 23 and serine 31. The span at 51–64 (QSLGLNVHNMTPAT) shows a compositional bias: polar residues. Over residues 76–99 (SQSSEGVSSLSSSPSNSLETQSQS) the composition is skewed to low complexity. 7 positions are modified to phosphoserine: serine 84, serine 88, serine 90, serine 101, serine 103, serine 105, and serine 124. A compositionally biased stretch (basic and acidic residues) spans 134–147 (NDRREKRSLSDKEP). Phosphoserine occurs at positions 238, 674, and 840. Positions 928-948 (NKEQWDQLPRDQQQARQSQLA) are disordered. A compositionally biased stretch (low complexity) spans 937–948 (RDQQQARQSQLA). One can recognise a U-box domain in the interval 1098 to 1171 (DAPDEFRDPL…QAWMREKQSS (74 aa)). A Phosphoserine modification is found at serine 1136.

This sequence belongs to the ubiquitin conjugation factor E4 family. As to quaternary structure, interacts with VCP. Interacts with STUB1/CHIP and UNC45B. In terms of processing, proteolytically cleaved by caspases during apoptosis. Cleaved efficiently at Asp-123 by caspase-6 and granzyme B. Cleaved with approximately 10-fold less efficiency at Asp-109 by caspase-3 and caspase-7. In terms of tissue distribution, expressed predominantly in neuronal tissues. Also detected in liver, heart, brain, kidney and testis.

The protein resides in the cytoplasm. It localises to the nucleus. The enzyme catalyses S-ubiquitinyl-[E2 ubiquitin-conjugating enzyme]-L-cysteine + [acceptor protein]-L-lysine = [E2 ubiquitin-conjugating enzyme]-L-cysteine + N(6)-ubiquitinyl-[acceptor protein]-L-lysine.. Its pathway is protein modification; protein ubiquitination. In terms of biological role, ubiquitin-protein ligase that probably functions as an E3 ligase in conjunction with specific E1 and E2 ligases. May also function as an E4 ligase mediating the assembly of polyubiquitin chains on substrates ubiquitinated by another E3 ubiquitin ligase. May regulate myosin assembly in striated muscles together with STUB1 and VCP/p97 by targeting myosin chaperone UNC45B for proteasomal degradation. The protein is Ubiquitin conjugation factor E4 B of Mus musculus (Mouse).